A 398-amino-acid polypeptide reads, in one-letter code: 4-hydroxy-3-methylbut-2-enyl diphosphate reductase (398 aa).

A [4Fe-4S] cluster-binding site is contributed by Cys66. His96 provides a ligand contact to (2E)-4-hydroxy-3-methylbut-2-enyl diphosphate. His96 is a dimethylallyl diphosphate binding site. His96 is a binding site for isopentenyl diphosphate. Cys157 lines the [4Fe-4S] cluster pocket. His185 contacts (2E)-4-hydroxy-3-methylbut-2-enyl diphosphate. Position 185 (His185) interacts with dimethylallyl diphosphate. Residue His185 participates in isopentenyl diphosphate binding. Catalysis depends on Glu187, which acts as the Proton donor. Thr250 is a (2E)-4-hydroxy-3-methylbut-2-enyl diphosphate binding site. [4Fe-4S] cluster is bound at residue Cys288. (2E)-4-hydroxy-3-methylbut-2-enyl diphosphate-binding residues include Ser317, Ser318, Asn319, and Ser379. Ser317, Ser318, Asn319, and Ser379 together coordinate dimethylallyl diphosphate. Residues Ser317, Ser318, Asn319, and Ser379 each contribute to the isopentenyl diphosphate site.

The protein belongs to the IspH family. [4Fe-4S] cluster serves as cofactor.

It catalyses the reaction isopentenyl diphosphate + 2 oxidized [2Fe-2S]-[ferredoxin] + H2O = (2E)-4-hydroxy-3-methylbut-2-enyl diphosphate + 2 reduced [2Fe-2S]-[ferredoxin] + 2 H(+). It carries out the reaction dimethylallyl diphosphate + 2 oxidized [2Fe-2S]-[ferredoxin] + H2O = (2E)-4-hydroxy-3-methylbut-2-enyl diphosphate + 2 reduced [2Fe-2S]-[ferredoxin] + 2 H(+). It functions in the pathway isoprenoid biosynthesis; dimethylallyl diphosphate biosynthesis; dimethylallyl diphosphate from (2E)-4-hydroxy-3-methylbutenyl diphosphate: step 1/1. The protein operates within isoprenoid biosynthesis; isopentenyl diphosphate biosynthesis via DXP pathway; isopentenyl diphosphate from 1-deoxy-D-xylulose 5-phosphate: step 6/6. Its function is as follows. Catalyzes the conversion of 1-hydroxy-2-methyl-2-(E)-butenyl 4-diphosphate (HMBPP) into a mixture of isopentenyl diphosphate (IPP) and dimethylallyl diphosphate (DMAPP). Acts in the terminal step of the DOXP/MEP pathway for isoprenoid precursor biosynthesis. This chain is 4-hydroxy-3-methylbut-2-enyl diphosphate reductase, found in Synechococcus sp. (strain ATCC 27144 / PCC 6301 / SAUG 1402/1) (Anacystis nidulans).